Consider the following 350-residue polypeptide: Twinfilin-1 (350 aa).

Residue Ser-2 is modified to N-acetylserine. The 138-residue stretch at Ser-2–Leu-139 folds into the ADF-H 1 domain. Phosphoserine occurs at positions 143 and 277. An ADF-H 2 domain is found at Leu-175 to His-313. Tyr-309 carries the post-translational modification Phosphotyrosine. The tract at residues Gln-316–Asp-350 is disordered. Thr-349 is subject to Phosphothreonine.

The protein belongs to the actin-binding proteins ADF family. Twinfilin subfamily. In terms of assembly, interacts with G-actin; ADP-actin form and capping protein (CP). May also be able to interact with TWF2 and phosphoinositides, PI(4,5)P2. When bound to PI(4,5)P2, it is down-regulated. Interacts with ACTG1. Phosphorylated on serine and threonine residues.

The protein localises to the cytoplasm. It is found in the cytoskeleton. In terms of biological role, actin-binding protein involved in motile and morphological processes. Inhibits actin polymerization, likely by sequestering G-actin. By capping the barbed ends of filaments, it also regulates motility. Seems to play an important role in clathrin-mediated endocytosis and distribution of endocytic organelles. The polypeptide is Twinfilin-1 (TWF1) (Pongo abelii (Sumatran orangutan)).